The chain runs to 319 residues: Mitochondrial fission regulator 1-like-A (319 aa).

Positions M1–T37 are disordered. The span at E9–R30 shows a compositional bias: basic and acidic residues.

This sequence belongs to the MTFR1 family.

Its subcellular location is the mitochondrion outer membrane. Its function is as follows. Mitochondrial protein required for adaptation of miochondrial dynamics to metabolic changes. Regulates mitochondrial morphology at steady state and mediates AMPK-dependent stress-induced mitochondrial fragmentation via the control of OPA1 levels. This is Mitochondrial fission regulator 1-like-A (mtfr1l-a) from Xenopus laevis (African clawed frog).